The following is a 504-amino-acid chain: Xanthotoxol synthase (504 aa).

A helical transmembrane segment spans residues 3–23 (PAAIFLILAIPIASVYLLFYH). The substrate specificity stretch occupies residues 363 to 368 (PGPLLI). C444 provides a ligand contact to heme.

This sequence belongs to the cytochrome P450 family. Heme serves as cofactor.

The protein localises to the microsome membrane. It carries out the reaction psoralen + reduced [NADPH--hemoprotein reductase] + O2 = xanthotoxol + oxidized [NADPH--hemoprotein reductase] + H2O + H(+). The enzyme catalyses 6-methoxycoumarin + reduced [NADPH--hemoprotein reductase] + O2 = scopoletin + oxidized [NADPH--hemoprotein reductase] + H2O + H(+). Its pathway is secondary metabolite biosynthesis. Involved in the biosynthesis of coumarins and furanocoumarins (FCs), natural products required for defense responses against attacks by predators with potential medical and agroindustrial usages such as anticoagulant, rodenticide and artificial vanilla substitutes. Catalyzes the conversion of psoralen into xanthotoxol and of 6-methoxycoumarin into scopoletin. Can also convert with a lower efficiency scopoletin into fraxetin and 7-methoxycoumarin into daphnetin-7-methylether, and use 7-methoxy-3-methylcoumarin as substrate. The protein is Xanthotoxol synthase of Pastinaca sativa (Wild parsnip).